Here is a 216-residue protein sequence, read N- to C-terminus: ATP phosphoribosyltransferase (216 aa).

This sequence belongs to the ATP phosphoribosyltransferase family. Short subfamily. In terms of assembly, heteromultimer composed of HisG and HisZ subunits.

The protein localises to the cytoplasm. It carries out the reaction 1-(5-phospho-beta-D-ribosyl)-ATP + diphosphate = 5-phospho-alpha-D-ribose 1-diphosphate + ATP. Its pathway is amino-acid biosynthesis; L-histidine biosynthesis; L-histidine from 5-phospho-alpha-D-ribose 1-diphosphate: step 1/9. In terms of biological role, catalyzes the condensation of ATP and 5-phosphoribose 1-diphosphate to form N'-(5'-phosphoribosyl)-ATP (PR-ATP). Has a crucial role in the pathway because the rate of histidine biosynthesis seems to be controlled primarily by regulation of HisG enzymatic activity. The chain is ATP phosphoribosyltransferase from Nitrosomonas eutropha (strain DSM 101675 / C91 / Nm57).